Here is a 777-residue protein sequence, read N- to C-terminus: Kelch domain-containing protein 7A (777 aa).

A helical membrane pass occupies residues 21-38; it reads VVLSAAALLLVTVAYRLY. A disordered region spans residues 43–207; it reads APAQRWGGNG…GLGQLEPPHC (165 aa). Residue serine 86 is modified to Phosphoserine. Positions 113-127 are enriched in basic and acidic residues; it reads TDRKPQRKGSGEERG. N-linked (GlcNAc...) asparagine glycosylation occurs at asparagine 257. A disordered region spans residues 313-359; the sequence is LTEVPSPRPPPGSLGTGAASGGQAGDTKGAAERAASPQTGPWPSTRG. Residues 326–336 are compositionally biased toward gly residues; sequence LGTGAASGGQA. Kelch repeat units lie at residues 328–374, 492–538, 541–589, 590–632, and 635–677; these read TGAA…ENPE, QYLV…ICSL, YLFV…ALDG, HLYA…ATVR, and EIFV…AVNG. Position 365 is a phosphoserine (serine 365).

It localises to the membrane. This chain is Kelch domain-containing protein 7A (KLHDC7A), found in Homo sapiens (Human).